The following is a 445-amino-acid chain: Probable D-serine dehydratase (445 aa).

N6-(pyridoxal phosphate)lysine is present on K116.

It belongs to the serine/threonine dehydratase family. DsdA subfamily. Requires pyridoxal 5'-phosphate as cofactor.

The catalysed reaction is D-serine = pyruvate + NH4(+). This is Probable D-serine dehydratase from Bacillus mycoides (strain KBAB4) (Bacillus weihenstephanensis).